A 118-amino-acid polypeptide reads, in one-letter code: Large ribosomal subunit protein bL19 (118 aa).

Belongs to the bacterial ribosomal protein bL19 family.

In terms of biological role, this protein is located at the 30S-50S ribosomal subunit interface and may play a role in the structure and function of the aminoacyl-tRNA binding site. The polypeptide is Large ribosomal subunit protein bL19 (Geobacter sulfurreducens (strain ATCC 51573 / DSM 12127 / PCA)).